The chain runs to 267 residues: Putative ankyrin repeat protein RF_1099 (267 aa).

ANK repeat units follow at residues 46-75 (DPIT…GVNQ), 78-107 (LGWV…SMSL), 136-165 (DGIT…NPNV), and 170-199 (TGMT…DPNI). Residues 238 to 265 (KQKIIKERNSIKTRNKEKEKEIKKLFNS) are a coiled coil.

This Rickettsia felis (strain ATCC VR-1525 / URRWXCal2) (Rickettsia azadi) protein is Putative ankyrin repeat protein RF_1099.